A 932-amino-acid chain; its full sequence is Eukaryotic translation initiation factor 3 subunit A (932 aa).

The region spanning 309–492 (KPATANFVIL…NSISFSSDLF (184 aa)) is the PCI domain. Ser-374 and Ser-501 each carry phosphoserine. The stretch at 537-862 (LRKQQAEAAY…DEEISRKLAE (326 aa)) forms a coiled coil. A compositionally biased stretch (basic and acidic residues) spans 793-865 (AEEEAARAAE…ISRKLAEKAA (73 aa)). The tract at residues 793–932 (AEEEAARAAE…PPSRRNQQQQ (140 aa)) is disordered. Residues Ser-874, Ser-875, and Ser-877 each carry the phosphoserine modification. Residues 877 to 893 (SPGAWRRGGASAGGVSR) are compositionally biased toward low complexity.

Belongs to the eIF-3 subunit A family. In terms of assembly, component of the eukaryotic translation initiation factor 3 (eIF-3) complex. The eIF-3 complex appears to include tif32/eif3a, SPAC25G10.08/eif3b, tif33/eif3c, SPBC4C3.07/eif3f, tif35/eif3g and sum1/eif3i. This set of common subunits may also associate exclusively with either moe1/eif3d and int6/eif3e, or with SPAC821.05/eif3h and SPAC1751.03/eif3m. The eIF-3 complex may also include SPAC3A12.13c/eif3j.

The protein resides in the cytoplasm. Its function is as follows. RNA-binding component of the eukaryotic translation initiation factor 3 (eIF-3) complex, which is involved in protein synthesis of a specialized repertoire of mRNAs and, together with other initiation factors, stimulates binding of mRNA and methionyl-tRNAi to the 40S ribosome. The eIF-3 complex specifically targets and initiates translation of a subset of mRNAs involved in cell proliferation. The protein is Eukaryotic translation initiation factor 3 subunit A (tif32) of Schizosaccharomyces pombe (strain 972 / ATCC 24843) (Fission yeast).